We begin with the raw amino-acid sequence, 412 residues long: MNAEIIAVGTELLLGQIANTNAQFLSEKLASIGINVYYHTVVGDNNKRLQQAIEVAEERADMLIFTGGLGPTKDDLTKETIASSLAEELVYDEKALASISDYFKRTGREFTENNKKQALVLDGATVFANDHGMAPGMGLNKNGKVYILLPGPPKEMKPMYVSYVEPFLRNFTTGENIYSRVLRFFGIGESQLEVKVQDLIDGQTNPTIAPLANDGEVTLRLTAKHQNVDEAEKLIQHVEDLILERVGGFFYGYDQEFLHDKAIVLLKKKGLTLACAESLTGGLFGNQVTESAGVSSVFKGGVICYHNDVKQHVLHVPEEVLFTDGAVSKECARYLAENVKELLEADIGISFTGVAGPDASEHKEPGTVFVGLAIKDEPTVVFPLNLSGSRQQIRERSAKYGFYHLYKKLEEI.

This sequence belongs to the CinA family.

In Bacillus anthracis, this protein is Putative competence-damage inducible protein.